A 330-amino-acid polypeptide reads, in one-letter code: Polyprenal reductase (330 aa).

The Cytoplasmic segment spans residues 1-19 (MASWVGTELSALNPLRTLW). The helical transmembrane segment at 20-40 (LALAAAFLLALLLQLAPAGLL) threads the bilayer. Residues 41–74 (PNCALFQDLIRYGKTKLSGPRRPAVCRAFDVPKR) lie on the Lumenal side of the membrane. Residues 75 to 95 (YFSHFYVVSVLWNGFLLWFLS) form a helical membrane-spanning segment. Over 96-132 (RSLFLGAPFPNWLRALLRTLGSTQFRALEMESKASQM) the chain is Cytoplasmic. Residues 133 to 153 (LVGELALSAFLVLVFLWVHSV) form a helical membrane-spanning segment. The Lumenal portion of the chain corresponds to 154–168 (RRLFECFYISVFSNA). A helical transmembrane segment spans residues 169–189 (VMHVVQYCFGLVYYVLVGLTV). Residues 190–206 (LSQVPMDDKNVYMLGKN) are Cytoplasmic-facing. A helical transmembrane segment spans residues 207–227 (LLLPARWFHVLGMMMFLWSSA). The Lumenal segment spans residues 228–277 (HQYECHVILSNLRRNKKGAIVHCQHRIPFGDWFEYVSSANYLAELMIYIS). Residues 278–298 (MAVTFGFHNFTWWLVVAYVFF) form a helical membrane-spanning segment. Over 299 to 330 (CQALSAFFNHKFYKSTFVSYPKHRKAFLPFLF) the chain is Cytoplasmic.

It belongs to the steroid 5-alpha reductase family. Polyprenal reductase subfamily.

Its subcellular location is the endoplasmic reticulum membrane. It catalyses the reaction a di-trans,poly-cis-dolichal + NADP(+) = a di-trans,poly-cis-polyprenal + NADPH + H(+). It carries out the reaction a 3-oxo-5alpha-steroid + NADP(+) = a 3-oxo-Delta(4)-steroid + NADPH + H(+). The enzyme catalyses androst-4-ene-3,17-dione + NADPH + H(+) = 5alpha-androstan-3,17-dione + NADP(+). The catalysed reaction is 17beta-hydroxy-5alpha-androstan-3-one + NADP(+) = testosterone + NADPH + H(+). Its pathway is protein modification; protein glycosylation. Functionally, plays a key role in early steps of protein N-linked glycosylation by being involved in the conversion of polyprenol into dolichol. Acts as a polyprenal reductase that mediates the reduction of polyprenal into dolichal in a NADP-dependent mechanism. Dolichols are required for the synthesis of dolichol-linked monosaccharides and the oligosaccharide precursor used for N-glycosylation. Also able to convert testosterone (T) into 5-alpha-dihydrotestosterone (DHT). The chain is Polyprenal reductase from Mesocricetus auratus (Golden hamster).